We begin with the raw amino-acid sequence, 580 residues long: Small conductance calcium-activated potassium channel protein 2 (580 aa).

Disordered stretches follow at residues 1 to 68 (MSSC…VSKP) and 88 to 116 (GGGGGGGGGGGGSGHGSSSGTKSSKKKNQ). The span at 48 to 61 (SSPSAAAAASSSAP) shows a compositional bias: low complexity. The span at 88–104 (GGGGGGGGGGGGSGHGS) shows a compositional bias: gly residues. Residues 140–160 (LIFGMFGIVVMVIETELSWGA) form a helical membrane-spanning segment. Tyrosine 161 carries the phosphotyrosine modification. The chain crosses the membrane as a helical span at residues 169–189 (LALKCLISLSTIILLGLIIVY). The helical transmembrane segment at 215–235 (IFFICLEILVCAIHPIPGNYT) threads the bilayer. Residues 257–277 (IILSIPMFLRLYLIARVMLLH) traverse the membrane as a helical segment. A helical membrane pass occupies residues 306-326 (LMTICPGTVLLVFSISLWIIA). The segment at residues 346 to 366 (FLGAMWLISITFLSIGYGDMV) is an intramembrane region (pore-forming). A helical transmembrane segment spans residues 375–395 (VCLLTGIMGAGCTALVVAVVA). The segment at 413 to 489 (DTQLTKRVKN…LVDLAKTQNI (77 aa)) is calmodulin-binding. Residues 551 to 560 (HVTYNAERSR) are compositionally biased toward basic and acidic residues. Positions 551 to 580 (HVTYNAERSRSSSRRRRSSSTAPPTSSESS) are disordered. The span at 569–580 (SSTAPPTSSESS) shows a compositional bias: low complexity.

This sequence belongs to the potassium channel KCNN family. KCa2.2/KCNN2 subfamily. Homodimer. Heteromultimer with KCNN1 and KCNN3. The complex is composed of 4 channel subunits each of which binds to a calmodulin subunit which regulates the channel activity through calcium-binding. Interacts (via N-terminal domain) with MPP2. Brain.

Its subcellular location is the membrane. It localises to the cytoplasm. The protein resides in the myofibril. It is found in the sarcomere. The protein localises to the z line. It carries out the reaction K(+)(in) = K(+)(out). Inhibited by bee venom neurotoxin apamin. Inhibited by UCL 1684 and tetraethylammonium (TEA). Functionally, small conductance calcium-activated potassium channel that mediates the voltage-independent transmembrane transfer of potassium across the cell membrane through a constitutive interaction with calmodulin which binds the intracellular calcium allowing its opening. The current is characterized by a voltage-independent activation, an intracellular calcium concentration increase-dependent activation and a single-channel conductance of about 3 picosiemens. Also presents an inwardly rectifying current, thus reducing its already small outward conductance of potassium ions, which is particularly the case when the membrane potential displays positive values, above + 20 mV. The inward rectification could be due to a blockade of the outward current by intracellular divalent cations such as calcium and magnesium and could also be due to an intrinsic property of the channel pore, independent of intracellular divalent ions. There are three positively charged amino acids in the S6 transmembrane domain, close to the pore, that collectively control the conductance and rectification through an electrostatic mechanism. Additionally, electrostatic contributions from these residues also play an important role in determining the intrinsic open probability of the channel in the absence of calcium, affecting the apparent calcium affinity for activation. Forms an heteromeric complex with calmodulin, which is constitutively associated in a calcium-independent manner. Channel opening is triggered when calcium binds the calmodulin resulting in a rotary movement leading to the formation of the dimeric complex to open the gate. Plays a role in the repolarization phase of cardiac action potential. The protein is Small conductance calcium-activated potassium channel protein 2 of Rattus norvegicus (Rat).